The sequence spans 137 residues: uncharacterized protein (137 aa).

The region spanning Ser30–Ile105 is the Sm domain.

This is an uncharacterized protein from Dictyostelium discoideum (Social amoeba).